A 125-amino-acid chain; its full sequence is Fluoride-specific ion channel FluC (125 aa).

The next 4 membrane-spanning stretches (helical) occupy residues 1 to 21 (MIQA…RYFV), 32 to 52 (AFPW…GVFA), 68 to 88 (LLIT…LDAI), and 101 to 121 (IYIA…LAIM). Residues Gly-75 and Thr-78 each coordinate Na(+).

This sequence belongs to the fluoride channel Fluc/FEX (TC 1.A.43) family.

It is found in the cell inner membrane. The enzyme catalyses fluoride(in) = fluoride(out). Na(+) is not transported, but it plays an essential structural role and its presence is essential for fluoride channel function. Functionally, fluoride-specific ion channel. Important for reducing fluoride concentration in the cell, thus reducing its toxicity. The protein is Fluoride-specific ion channel FluC of Rhizobium etli (strain ATCC 51251 / DSM 11541 / JCM 21823 / NBRC 15573 / CFN 42).